The following is a 327-amino-acid chain: Pantothenate kinase (327 aa).

105–112 (GSVAVGKS) contacts ATP.

Belongs to the prokaryotic pantothenate kinase family.

The protein localises to the cytoplasm. The catalysed reaction is (R)-pantothenate + ATP = (R)-4'-phosphopantothenate + ADP + H(+). It participates in cofactor biosynthesis; coenzyme A biosynthesis; CoA from (R)-pantothenate: step 1/5. In Cutibacterium acnes (strain DSM 16379 / KPA171202) (Propionibacterium acnes), this protein is Pantothenate kinase.